The sequence spans 75 residues: uncharacterized protein (75 aa).

A helical membrane pass occupies residues 12-32; sequence LKVFILFTGFTALFYYAMIWV.

It localises to the cell membrane. This is an uncharacterized protein from Bacillus subtilis (strain 168).